The following is an 82-amino-acid chain: Acyl carrier protein (82 aa).

The region spanning 4–79 is the Carrier domain; sequence PEMEERLRKI…DALNYLETHQ (76 aa). O-(pantetheine 4'-phosphoryl)serine is present on Ser39.

Belongs to the acyl carrier protein (ACP) family. In terms of processing, 4'-phosphopantetheine is transferred from CoA to a specific serine of apo-ACP by AcpS. This modification is essential for activity because fatty acids are bound in thioester linkage to the sulfhydryl of the prosthetic group.

It localises to the cytoplasm. It participates in lipid metabolism; fatty acid biosynthesis. Its function is as follows. Carrier of the growing fatty acid chain in fatty acid biosynthesis. This is Acyl carrier protein from Chloroflexus aurantiacus (strain ATCC 29366 / DSM 635 / J-10-fl).